The following is a 325-amino-acid chain: Putative metal ion transporter ZIPCO (325 aa).

The next 3 membrane-spanning stretches (helical) occupy residues 5–25, 46–66, and 74–94; these read TFLA…PAYI, IASG…VIIL, and LYYI…TDIL. Residues Asn106 and Asn160 are each glycosylated (N-linked (GlcNAc...) asparagine). The next 4 helical transmembrane spans lie at 179–199, 239–259, 264–284, and 296–316; these read FFIV…MGSL, IYAW…IFSF, FVEI…SFNM, and HFIS…MILF.

Its subcellular location is the cytoplasmic vesicle membrane. Putative transporter for the divalent zinc and iron cations. This Plasmodium falciparum (isolate 3D7) protein is Putative metal ion transporter ZIPCO.